A 201-amino-acid polypeptide reads, in one-letter code: Single-stranded DNA-binding protein, mitochondrial (201 aa).

An SSB domain is found at 71–184 (VHRAIICGKV…RDGKIRMIKY (114 aa)).

Its subcellular location is the mitochondrion. Functionally, binds to ss-DNA. The protein is Single-stranded DNA-binding protein, mitochondrial of Arabidopsis thaliana (Mouse-ear cress).